The sequence spans 353 residues: MTATLERRESASLWGRFCNWITSTENRLYIGWFGVLMIPTLLTATSVFIIAFIAAPPVDIDGIREPVSGSLLYGNNIISGAIIPTSAAIGLHFYPIWEAASVDEWLYNGGPYELIVLHFLLGVACYMGREWELSFRLGMRPWIAVAYSAPVAAATAVFLIYPIGQGSFSDGMPLGISGTFNFMIVFQAEHNILMHPFHMLGVAGVFGGSLFSAMHGSLVTSSLIRETTENESANAGYKFGQEEETYNIVAAHGYFGRLIFQYASFNNSRSLHFFLAAWPVVGIWFTALGISTMAFNLNGFNFNQSVVDSQGRVINTWADIINRANLGMEVMHERNAHNFPLDLASIEAPLVNG.

Thr-2 is modified (N-acetylthreonine). Thr-2 carries the post-translational modification Phosphothreonine. Transmembrane regions (helical) follow at residues 29–46, 118–133, and 142–156; these read YIGWFGVLMIPTLLTATS, HFLLGVACYMGREWEL, and WIAVAYSAPVAAATA. His-118 serves as a coordination point for chlorophyll a. Tyr-126 is a pheophytin a binding site. [CaMn4O5] cluster is bound by residues Asp-170 and Glu-189. The chain crosses the membrane as a helical span at residues 197-218; sequence FHMLGVAGVFGGSLFSAMHGSL. A chlorophyll a-binding site is contributed by His-198. Residues His-215 and 264–265 each bind a quinone; that span reads SF. Residue His-215 participates in Fe cation binding. Residue His-272 participates in Fe cation binding. Residues 274–288 form a helical membrane-spanning segment; that stretch reads FLAAWPVVGIWFTAL. 4 residues coordinate [CaMn4O5] cluster: His-332, Glu-333, Asp-342, and Ala-344. Residues 345–353 constitute a propeptide that is removed on maturation; sequence SIEAPLVNG.

This sequence belongs to the reaction center PufL/M/PsbA/D family. As to quaternary structure, PSII is composed of 1 copy each of membrane proteins PsbA, PsbB, PsbC, PsbD, PsbE, PsbF, PsbH, PsbI, PsbJ, PsbK, PsbL, PsbM, PsbT, PsbX, PsbY, PsbZ, Psb30/Ycf12, at least 3 peripheral proteins of the oxygen-evolving complex and a large number of cofactors. It forms dimeric complexes. The D1/D2 heterodimer binds P680, chlorophylls that are the primary electron donor of PSII, and subsequent electron acceptors. It shares a non-heme iron and each subunit binds pheophytin, quinone, additional chlorophylls, carotenoids and lipids. D1 provides most of the ligands for the Mn4-Ca-O5 cluster of the oxygen-evolving complex (OEC). There is also a Cl(-1) ion associated with D1 and D2, which is required for oxygen evolution. The PSII complex binds additional chlorophylls, carotenoids and specific lipids. is required as a cofactor. Post-translationally, tyr-161 forms a radical intermediate that is referred to as redox-active TyrZ, YZ or Y-Z. C-terminally processed by CTPA; processing is essential to allow assembly of the oxygen-evolving complex and thus photosynthetic growth.

Its subcellular location is the plastid. It localises to the chloroplast thylakoid membrane. It catalyses the reaction 2 a plastoquinone + 4 hnu + 2 H2O = 2 a plastoquinol + O2. In terms of biological role, photosystem II (PSII) is a light-driven water:plastoquinone oxidoreductase that uses light energy to abstract electrons from H(2)O, generating O(2) and a proton gradient subsequently used for ATP formation. It consists of a core antenna complex that captures photons, and an electron transfer chain that converts photonic excitation into a charge separation. The D1/D2 (PsbA/PsbD) reaction center heterodimer binds P680, the primary electron donor of PSII as well as several subsequent electron acceptors. The protein is Photosystem II protein D1 of Psilotum nudum (Whisk fern).